The following is a 357-amino-acid chain: Glutamate 5-kinase (357 aa).

Lys-7 is an ATP binding site. 3 residues coordinate substrate: Ser-43, Asp-130, and Asn-142. 162–163 (TD) is a binding site for ATP. In terms of domain architecture, PUA spans 270–347 (QGELTLDAGA…PAAGPSPVVV (78 aa)).

It belongs to the glutamate 5-kinase family.

The protein localises to the cytoplasm. It carries out the reaction L-glutamate + ATP = L-glutamyl 5-phosphate + ADP. It participates in amino-acid biosynthesis; L-proline biosynthesis; L-glutamate 5-semialdehyde from L-glutamate: step 1/2. Catalyzes the transfer of a phosphate group to glutamate to form L-glutamate 5-phosphate. This chain is Glutamate 5-kinase, found in Parasynechococcus marenigrum (strain WH8102).